The chain runs to 348 residues: tRNA N6-adenosine threonylcarbamoyltransferase (348 aa).

2 residues coordinate Fe cation: histidine 116 and histidine 120. Substrate is bound by residues 138–142 (IISGG), aspartate 171, glycine 184, and asparagine 282. Position 310 (aspartate 310) interacts with Fe cation.

Belongs to the KAE1 / TsaD family. It depends on Fe(2+) as a cofactor.

It localises to the cytoplasm. The catalysed reaction is L-threonylcarbamoyladenylate + adenosine(37) in tRNA = N(6)-L-threonylcarbamoyladenosine(37) in tRNA + AMP + H(+). In terms of biological role, required for the formation of a threonylcarbamoyl group on adenosine at position 37 (t(6)A37) in tRNAs that read codons beginning with adenine. Is involved in the transfer of the threonylcarbamoyl moiety of threonylcarbamoyl-AMP (TC-AMP) to the N6 group of A37, together with TsaE and TsaB. TsaD likely plays a direct catalytic role in this reaction. The polypeptide is tRNA N6-adenosine threonylcarbamoyltransferase (Ehrlichia ruminantium (strain Gardel)).